A 399-amino-acid polypeptide reads, in one-letter code: MLPFPPGAILRDVLNVFFVALVLVRFVIDRKKTYFPLVFTIFSWSAVILWVIALTIFSPDKIQAIMGGRSYILFPAVFIALVILKVSYPQSLNIEKIVCYIIFLMFMVATISIIDVLMNGEFIKLLGYDEHYAGEQLNLINSYDGMVRATGGFSDALNFGYMLTLGVLLCMECFSQGYKRLLMLIISFVLFIAICMSLTRGAILVAALIYALYIISNRKMLFCGITLFVIIIPVLAISTNIFDNYTEILIGRFTDSSQASRGSTQGRIDMAINSLNFLSEHPSGIGLGTQGSGNMLSVKDNRLNTDNYFFWIALETGIIGLIINIIYLASQFYSSTLLNRIYGSHCSNMHYRLYFLFGSIYFISAALSSAPSSSTFSIYYWTVLALIPFLKLTNRRCTR.

The next 10 membrane-spanning stretches (helical) occupy residues 4–24, 37–57, 64–84, 97–117, 151–171, 185–205, 222–242, 309–329, 353–373, and 374–394; these read FPPG…LVLV, LVFT…LTIF, AIMG…LVIL, IVCY…IDVL, GGFS…LLCM, IISF…AILV, FCGI…TNIF, FFWI…IYLA, LYFL…APSS, and STFS…KLTN.

The protein resides in the cell inner membrane. The enzyme catalyses n lipid-linked O-antigen repeat units = a lipid-linked O antigen + (n-1) polyisoprenyl diphosphate.. Its pathway is bacterial outer membrane biogenesis; LPS O-antigen biosynthesis. Its function is as follows. Polymerase involved in the biosynthesis of the lipopolysaccharide (LPS). Catalyzes the polymerization of the O-antigen repeat units on the periplasmic face of the inner membrane, leading to the formation of the lipid-linked O-antigen molecule. This Salmonella muenchen protein is O-antigen polymerase.